A 336-amino-acid polypeptide reads, in one-letter code: Palmitoyltransferase SWF1 (336 aa).

Topologically, residues 1–2 (MS) are lumenal. The helical transmembrane segment at 3 to 23 (WNLLFVLLIGFVVLILLSPVF) threads the bilayer. Residues 24-50 (KSTWPFSTFYRNVFQPFLVDDQKYRWK) lie on the Cytoplasmic side of the membrane. The helical transmembrane segment at 51–71 (LHLVPLFYTSIYLYLVYTYHM) threads the bilayer. The Lumenal segment spans residues 72–86 (RVESTIKNELFLLER). A helical transmembrane segment spans residues 87-107 (ILIVPIIILPPVALGILAMVS). Over 108 to 179 (RAEDSKDHKS…CIGKGNYLQF (72 aa)) the chain is Cytoplasmic. One can recognise a DHHC domain in the interval 134 to 184 (IKCSTCRIVKPARSKHCSICNRCVLVADHHCIWINNCIGKGNYLQFYLFLI). Residues 180-200 (YLFLISNIFSMCYAFLRLWYI) form a helical membrane-spanning segment. Topologically, residues 201–216 (SLNSTSTLPRAVLTLT) are lumenal. A helical transmembrane segment spans residues 217 to 237 (ILCGCFTIICAIFTYLQLAIV). At 238–336 (KEGMTTNEQD…TFLANLTDLI (99 aa)) the chain is on the cytoplasmic side.

Belongs to the DHHC palmitoyltransferase family. SWF1 subfamily.

The protein localises to the endoplasmic reticulum membrane. It catalyses the reaction L-cysteinyl-[protein] + hexadecanoyl-CoA = S-hexadecanoyl-L-cysteinyl-[protein] + CoA. Palmitoyltransferase that targets several endosomal SNAREs. Palmitoylates the SNAREs SNC1, SNC2, SYN8 and TLG1, at cysteine residues close to the cytoplasmic end of their transmembrane domain. May have a role in the cellular quality control of transmembrane domain-containing proteins. This is Palmitoyltransferase SWF1 (SWF1) from Saccharomyces cerevisiae (strain ATCC 204508 / S288c) (Baker's yeast).